An 865-amino-acid polypeptide reads, in one-letter code: MRYTIITLGIIVIGIGIVLSKQWITVFYGIPVWKNSSVQAFCMTPTTSLWATTNCIPDDHDYTEVPLNITEPFEAWGDRNPLIAQAASNIHLLFEQTMKPCVKLSPLCIKMNCVELNSTRERATTPTTTPKSTGLPCVGPTSGENLQSCNASIIEREMEDEPASNCTFAMAGYVRDQKKNYYSVVWNDAEIYCKNKTNSTSKECYMIHCNDSVIKEACDKTYWDQLRLRYCAPAGYALLKCNDEDYNGYKQNCSNVSVVHCTGLMNTTVTTGLLLNGSYHENRTQIWQKHRVNNNTVLILFNKHYNLSVTCRRPGNKTVLPVTIMAGLVFHSQKYNMKLRQAWCHFEGNWRGAWREVKQKIVELPKDRYKGTNNTEHIYLQRQWGDPEASNLWFNCQGEFFYCKMDWFLNYLNNKTWDAYHNFCSSKKKGHAPGPCVQRTYVAYHIRSVINDSYTLSKKTYAPPREGHLQCRSTVTGMTVELNYNSKNRTNVTLSPQIESIWAAELGRYKLVEITPIGFAPTEVRRYTGGHERQKRVPFVLGFLGFLGAAGTAMGAAASSLTVQSRHLLAGILQQQKNLLAAVEAQQQMLKLTIWGVKNLNARVTALEKYLEDQARLNSWGCAWKQVCHTTVEWPWTNRTPDWQNMTWLEWERQIADLESNITGQLVKAREQEEKNLDAYQKLTSWSDFWSWFDFSKWLNILKMGFLVIVGIIGLRLLYTVYGCIVRVRQGYVPLSPQIHIHQVGKGRPDNADEPGEGGDNSRIKLESWXKDSKSRCMQLTAWLTRLNTWLYNSCLTLLIQLRKAFQYLQYGLAELKTGAQEILQTLAGVAQNACHQIWLACRSAYRNIVNSPRRVRQGLEEILN.

The N-terminal stretch at 1–20 is a signal peptide; sequence MRYTIITLGIIVIGIGIVLS. Over 21–705 the chain is Extracellular; that stretch reads KQWITVFYGI…SKWLNILKMG (685 aa). An N-linked (GlcNAc...) asparagine; by host glycan is attached at asparagine 35. A disulfide bridge links cysteine 42 with cysteine 55. Asparagine 68, asparagine 117, asparagine 150, asparagine 165, asparagine 195, asparagine 198, asparagine 210, asparagine 252, asparagine 255, asparagine 266, asparagine 276, asparagine 282, asparagine 294, asparagine 306, asparagine 316, asparagine 373, asparagine 414, asparagine 451, asparagine 488, and asparagine 491 each carry an N-linked (GlcNAc...) asparagine; by host glycan. Disulfide bonds link cysteine 101–cysteine 218, cysteine 108–cysteine 209, cysteine 113–cysteine 166, cysteine 231–cysteine 261, and cysteine 241–cysteine 253. The tract at residues 113–165 is V1; that stretch reads CVELNSTRERATTPTTTPKSTGLPCVGPTSGENLQSCNASIIEREMEDEPASN. Residues 166-209 are V2; sequence CTFAMAGYVRDQKKNYYSVVWNDAEIYCKNKTNSTSKECYMIHC. A V3 region spans residues 311–343; the sequence is CRRPGNKTVLPVTIMAGLVFHSQKYNMKLRQAW. A disulfide bridge links cysteine 311 with cysteine 344. A disulfide bridge links cysteine 396 with cysteine 471. A V4 region spans residues 403–444; the sequence is CKMDWFLNYLNNKTWDAYHNFCSSKKKGHAPGPCVQRTYVAY. Residues 487-494 are V5; sequence KNRTNVTL. The interval 537–557 is fusion peptide; it reads VPFVLGFLGFLGAAGTAMGAA. An immunosuppression region spans residues 600 to 616; sequence LNARVTALEKYLEDQAR. N-linked (GlcNAc...) asparagine; by host glycosylation is found at asparagine 645 and asparagine 661. Positions 650–675 form a coiled coil; the sequence is EWERQIADLESNITGQLVKAREQEEK. The segment at 682 to 703 is MPER; binding to GalCer; sequence KLTSWSDFWSWFDFSKWLNILK. Residues 706–726 form a helical membrane-spanning segment; that stretch reads FLVIVGIIGLRLLYTVYGCIV. Over 727–865 the chain is Cytoplasmic; sequence RVRQGYVPLS…VRQGLEEILN (139 aa). A YXXL motif; contains endocytosis signal motif is present at residues 732-735; it reads YVPL. Residues 744–763 are disordered; the sequence is VGKGRPDNADEPGEGGDNSR.

In terms of assembly, the mature envelope protein (Env) consists of a homotrimer of non-covalently associated gp120-gp41 heterodimers. The resulting complex protrudes from the virus surface as a spike. Interacts with host CD4 and CCR5. Gp120 also interacts with the C-type lectins CD209/DC-SIGN and CLEC4M/DC-SIGNR (collectively referred to as DC-SIGN(R)). The mature envelope protein (Env) consists of a homotrimer of non-covalently associated gp120-gp41 heterodimers. The resulting complex protrudes from the virus surface as a spike. Post-translationally, specific enzymatic cleavages in vivo yield mature proteins. Envelope glycoproteins are synthesized as an inactive precursor that is heavily N-glycosylated and processed likely by host cell furin in the Golgi to yield the mature SU and TM proteins. The cleavage site between SU and TM requires the minimal sequence [KR]-X-[KR]-R.

The protein resides in the virion membrane. It is found in the host cell membrane. It localises to the host endosome membrane. In terms of biological role, the surface protein gp120 (SU) attaches the virus to the host lymphoid cell by binding to the primary receptor CD4. This interaction induces a structural rearrangement creating a high affinity binding site for a chemokine coreceptor like CCR5. This peculiar 2 stage receptor-interaction strategy allows gp120 to maintain the highly conserved coreceptor-binding site in a cryptic conformation, protected from neutralizing antibodies. These changes are transmitted to the transmembrane protein gp41 and are thought to activate its fusogenic potential by unmasking its fusion peptide. Functionally, surface protein gp120 (SU) may target the virus to gut-associated lymphoid tissue (GALT) by binding host ITGA4/ITGB7 (alpha-4/beta-7 integrins), a complex that mediates T-cell migration to the GALT. Interaction between gp120 and ITGA4/ITGB7 would allow the virus to enter GALT early in the infection, infecting and killing most of GALT's resting CD4+ T-cells. This T-cell depletion is believed to be the major insult to the host immune system leading to AIDS. The surface protein gp120 is a ligand for CD209/DC-SIGN and CLEC4M/DC-SIGNR, which are respectively found on dendritic cells (DCs), and on endothelial cells of liver sinusoids and lymph node sinuses. These interactions allow capture of viral particles at mucosal surfaces by these cells and subsequent transmission to permissive cells. DCs are professional antigen presenting cells, critical for host immunity by inducing specific immune responses against a broad variety of pathogens. They act as sentinels in various tissues where they take up antigen, process it, and present it to T-cells following migration to lymphoid organs. SIV subverts the migration properties of dendritic cells to gain access to CD4+ T-cells in lymph nodes. Virus transmission to permissive T-cells occurs either in trans (without DCs infection, through viral capture and transmission), or in cis (following DCs productive infection, through the usual CD4-gp120 interaction), thereby inducing a robust infection. In trans infection, bound virions remain infectious over days and it is proposed that they are not degraded, but protected in non-lysosomal acidic organelles within the DCs close to the cell membrane thus contributing to the viral infectious potential during DCs' migration from the periphery to the lymphoid tissues. On arrival at lymphoid tissues, intact virions recycle back to DCs' cell surface allowing virus transmission to CD4+ T-cells. Virion capture also seems to lead to MHC-II-restricted viral antigen presentation, and probably to the activation of SIV-specific CD4+ cells. Its function is as follows. The transmembrane protein gp41 (TM) acts as a class I viral fusion protein. Under the current model, the protein has at least 3 conformational states: pre-fusion native state, pre-hairpin intermediate state, and post-fusion hairpin state. During fusion of viral and target intracellular membranes, the coiled coil regions (heptad repeats) assume a trimer-of-hairpins structure, positioning the fusion peptide in close proximity to the C-terminal region of the ectodomain. The formation of this structure appears to drive apposition and subsequent fusion of viral and target cell membranes. Complete fusion occurs in host cell endosomes. The virus undergoes clathrin-dependent internalization long before endosomal fusion, thus minimizing the surface exposure of conserved viral epitopes during fusion and reducing the efficacy of inhibitors targeting these epitopes. Membranes fusion leads to delivery of the nucleocapsid into the cytoplasm. In terms of biological role, the envelope glycoprotein gp160 precursor down-modulates cell surface CD4 antigen by interacting with it in the endoplasmic reticulum and blocking its transport to the cell surface. Functionally, the gp120-gp41 heterodimer allows rapid transcytosis of the virus through CD4 negative cells such as simple epithelial monolayers of the intestinal, rectal and endocervical epithelial barriers. Both gp120 and gp41 specifically recognize glycosphingolipids galactosyl-ceramide (GalCer) or 3' sulfo-galactosyl-ceramide (GalS) present in the lipid rafts structures of epithelial cells. Binding to these alternative receptors allows the rapid transcytosis of the virus through the epithelial cells. This transcytotic vesicle-mediated transport of virions from the apical side to the basolateral side of the epithelial cells does not involve infection of the cells themselves. The protein is Envelope glycoprotein gp160 (env) of Simian immunodeficiency virus agm.vervet (isolate AGM TYO-1) (SIV-agm.ver).